Here is a 174-residue protein sequence, read N- to C-terminus: Adipose-secreted signaling protein (174 aa).

The residue at position 2 (Ala-2) is an N-acetylalanine. Thr-147 is modified (phosphothreonine).

The protein belongs to the ADISSP family.

The protein resides in the secreted. Functionally, adipocyte-secreted protein (adipokine) that acts as a key regulator for white adipose tissue (WAT) thermogenesis and glucose homeostasis at least in part through activation of protein kinase A (PKA). This is Adipose-secreted signaling protein from Homo sapiens (Human).